A 269-amino-acid polypeptide reads, in one-letter code: Kafirin PGK1 (269 aa).

Residues 1–21 (MATKIFALLALHALLVSGTTA) form the signal peptide.

This sequence belongs to the zein family.

In terms of biological role, major seed storage prolamin. The protein is Kafirin PGK1 of Sorghum bicolor (Sorghum).